We begin with the raw amino-acid sequence, 462 residues long: GTPase Der (462 aa).

EngA-type G domains lie at 2 to 164 and 195 to 366; these read KKIA…PKKE and INVA…KNYS. Residues 8–15, 55–59, 116–119, 201–208, 248–252, and 312–315 contribute to the GTP site; these read GKPNVGKS, DTGGI, NKID, GRVNVGKS, DTAGI, and NKWD. Positions 367–451 constitute a KH-like domain; sequence TWLPTGQLNR…PIILRPRKRG (85 aa).

This sequence belongs to the TRAFAC class TrmE-Era-EngA-EngB-Septin-like GTPase superfamily. EngA (Der) GTPase family. In terms of assembly, associates with the 50S ribosomal subunit.

GTPase that plays an essential role in the late steps of ribosome biogenesis. This is GTPase Der from Nitratiruptor sp. (strain SB155-2).